The primary structure comprises 343 residues: Glyceraldehyde-3-phosphate dehydrogenase (343 aa).

Residues 13-14 and G112 contribute to the NAD(+) site; that span reads TI. 141–143 contributes to the D-glyceraldehyde 3-phosphate binding site; sequence SCN. Catalysis depends on C142, which acts as the Nucleophile. R170 contributes to the NAD(+) binding site. Position 196–197 (196–197) interacts with D-glyceraldehyde 3-phosphate; the sequence is HA. Q303 lines the NAD(+) pocket.

The protein belongs to the glyceraldehyde-3-phosphate dehydrogenase family. Homotetramer.

It is found in the cytoplasm. The catalysed reaction is D-glyceraldehyde 3-phosphate + phosphate + NADP(+) = (2R)-3-phospho-glyceroyl phosphate + NADPH + H(+). It carries out the reaction D-glyceraldehyde 3-phosphate + phosphate + NAD(+) = (2R)-3-phospho-glyceroyl phosphate + NADH + H(+). It functions in the pathway carbohydrate degradation; glycolysis; pyruvate from D-glyceraldehyde 3-phosphate: step 1/5. This Aeropyrum pernix (strain ATCC 700893 / DSM 11879 / JCM 9820 / NBRC 100138 / K1) protein is Glyceraldehyde-3-phosphate dehydrogenase (gap).